A 97-amino-acid polypeptide reads, in one-letter code: Co-chaperonin GroES (97 aa).

The protein belongs to the GroES chaperonin family. In terms of assembly, heptamer of 7 subunits arranged in a ring. Interacts with the chaperonin GroEL.

The protein resides in the cytoplasm. Functionally, together with the chaperonin GroEL, plays an essential role in assisting protein folding. The GroEL-GroES system forms a nano-cage that allows encapsulation of the non-native substrate proteins and provides a physical environment optimized to promote and accelerate protein folding. GroES binds to the apical surface of the GroEL ring, thereby capping the opening of the GroEL channel. The sequence is that of Co-chaperonin GroES from Stutzerimonas stutzeri (strain A1501) (Pseudomonas stutzeri).